The chain runs to 365 residues: tRNA 2-selenouridine synthase (365 aa).

The region spanning Leu15 to Asp138 is the Rhodanese domain. Cys98 serves as the catalytic S-selanylcysteine intermediate.

This sequence belongs to the SelU family. In terms of assembly, monomer.

It catalyses the reaction 5-methylaminomethyl-2-thiouridine(34) in tRNA + selenophosphate + (2E)-geranyl diphosphate + H2O + H(+) = 5-methylaminomethyl-2-selenouridine(34) in tRNA + (2E)-thiogeraniol + phosphate + diphosphate. The enzyme catalyses 5-methylaminomethyl-2-thiouridine(34) in tRNA + (2E)-geranyl diphosphate = 5-methylaminomethyl-S-(2E)-geranyl-thiouridine(34) in tRNA + diphosphate. It carries out the reaction 5-methylaminomethyl-S-(2E)-geranyl-thiouridine(34) in tRNA + selenophosphate + H(+) = 5-methylaminomethyl-2-(Se-phospho)selenouridine(34) in tRNA + (2E)-thiogeraniol. The catalysed reaction is 5-methylaminomethyl-2-(Se-phospho)selenouridine(34) in tRNA + H2O = 5-methylaminomethyl-2-selenouridine(34) in tRNA + phosphate. Its function is as follows. Involved in the post-transcriptional modification of the uridine at the wobble position (U34) of tRNA(Lys), tRNA(Glu) and tRNA(Gln). Catalyzes the conversion of 2-thiouridine (S2U-RNA) to 2-selenouridine (Se2U-RNA). Acts in a two-step process involving geranylation of 2-thiouridine (S2U) to S-geranyl-2-thiouridine (geS2U) and subsequent selenation of the latter derivative to 2-selenouridine (Se2U) in the tRNA chain. This Shewanella piezotolerans (strain WP3 / JCM 13877) protein is tRNA 2-selenouridine synthase.